A 123-amino-acid polypeptide reads, in one-letter code: Large ribosomal subunit protein bL17 (123 aa).

Belongs to the bacterial ribosomal protein bL17 family. Part of the 50S ribosomal subunit. Contacts protein L32.

The sequence is that of Large ribosomal subunit protein bL17 from Mycoplasma genitalium (strain ATCC 33530 / DSM 19775 / NCTC 10195 / G37) (Mycoplasmoides genitalium).